We begin with the raw amino-acid sequence, 75 residues long: ATP synthase subunit c (75 aa).

The next 2 helical transmembrane spans lie at 4–24 (GLIA…GLGQ) and 54–74 (AVAE…MFAF).

It belongs to the ATPase C chain family. In terms of assembly, F-type ATPases have 2 components, F(1) - the catalytic core - and F(0) - the membrane proton channel. F(1) has five subunits: alpha(3), beta(3), gamma(1), delta(1), epsilon(1). F(0) has three main subunits: a(1), b(2) and c(10-14). The alpha and beta chains form an alternating ring which encloses part of the gamma chain. F(1) is attached to F(0) by a central stalk formed by the gamma and epsilon chains, while a peripheral stalk is formed by the delta and b chains.

It is found in the cell membrane. In terms of biological role, f(1)F(0) ATP synthase produces ATP from ADP in the presence of a proton or sodium gradient. F-type ATPases consist of two structural domains, F(1) containing the extramembraneous catalytic core and F(0) containing the membrane proton channel, linked together by a central stalk and a peripheral stalk. During catalysis, ATP synthesis in the catalytic domain of F(1) is coupled via a rotary mechanism of the central stalk subunits to proton translocation. Key component of the F(0) channel; it plays a direct role in translocation across the membrane. A homomeric c-ring of between 10-14 subunits forms the central stalk rotor element with the F(1) delta and epsilon subunits. This is ATP synthase subunit c from Mycoplasmopsis agalactiae (strain NCTC 10123 / CIP 59.7 / PG2) (Mycoplasma agalactiae).